Here is a 513-residue protein sequence, read N- to C-terminus: V-type proton ATPase subunit B (513 aa).

R375 serves as a coordination point for ATP. The span at 484-503 (ADRKGKGKDKPTTKDTRDTA) shows a compositional bias: basic and acidic residues. The interval 484-513 (ADRKGKGKDKPTTKDTRDTAAPEEENLIDA) is disordered. A compositionally biased stretch (acidic residues) spans 504-513 (APEEENLIDA).

This sequence belongs to the ATPase alpha/beta chains family. V-ATPase is a heteromultimeric enzyme composed of a peripheral catalytic V1 complex (components A to H) attached to an integral membrane V0 proton pore complex (components: a, c, c', c'', d, e, f and VOA1).

The protein localises to the vacuole membrane. Its function is as follows. Non-catalytic subunit of the V1 complex of vacuolar(H+)-ATPase (V-ATPase), a multisubunit enzyme composed of a peripheral complex (V1) that hydrolyzes ATP and a membrane integral complex (V0) that translocates protons. V-ATPase is responsible for acidifying and maintaining the pH of intracellular compartments. In Neurospora crassa (strain ATCC 24698 / 74-OR23-1A / CBS 708.71 / DSM 1257 / FGSC 987), this protein is V-type proton ATPase subunit B.